Consider the following 491-residue polypeptide: MIPVVALVGRPNVGKSTLFNRLTRTRDALVADFPGLTRDRKYGRAFLSGYEFIVVDTGGIDGSEEGIETKMAEQSLAAIEEADVVLFLTDARAGLTSADLAIAQHLRSRDKTTFVVANKVDGIDADSVCGEFWALGLGEVYQMAAAQGRGVTNMIEYALAPYAEAMGLNRDDDEQAIEEEREYTEEEAEAEQKRLQDLPIKLAIIGKPNVGKSTLINRILGEERVVVYDAPGTTRDSIYIPMEREGREYVLIDTAGVRRRSKVHEVIEKFSVIKTLKAVEDANVVLLVVDAREGIAEQDLGLLGFTLNAGRALVIAVNKWDGIDQTVKDRVKSELDRRLGFIDFAKIHFISALHGTGVGHLYESIEEAYDSATRRVSTSMLTRVMQMSQDDHQPPLVNGRRVKLKYAHAGGYNPPIIVVHGNQVSKLPDSYKRYMMNYFRRSLKVVGTPIQIRFQEGDNPFEGKVDKLTMGQERRRKRALSHINDRKTKGE.

2 consecutive EngA-type G domains span residues 3–166 (PVVA…AEAM) and 200–373 (IKLA…DSAT). GTP-binding positions include 9-16 (GRPNVGKS), 56-60 (DTGGI), 118-121 (NKVD), 206-213 (GKPNVGKS), 253-257 (DTAGV), and 318-321 (NKWD). Residues 374 to 458 (RRVSTSMLTR…PIQIRFQEGD (85 aa)) form the KH-like domain. A disordered region spans residues 472-491 (QERRRKRALSHINDRKTKGE).

This sequence belongs to the TRAFAC class TrmE-Era-EngA-EngB-Septin-like GTPase superfamily. EngA (Der) GTPase family. In terms of assembly, associates with the 50S ribosomal subunit.

In terms of biological role, GTPase that plays an essential role in the late steps of ribosome biogenesis. This Shewanella denitrificans (strain OS217 / ATCC BAA-1090 / DSM 15013) protein is GTPase Der.